The following is a 196-amino-acid chain: FMN-dependent NADH:quinone oxidoreductase (196 aa).

Position 10 (Ser10) interacts with FMN.

Belongs to the azoreductase type 1 family. As to quaternary structure, homodimer. FMN serves as cofactor.

It catalyses the reaction 2 a quinone + NADH + H(+) = 2 a 1,4-benzosemiquinone + NAD(+). It carries out the reaction N,N-dimethyl-1,4-phenylenediamine + anthranilate + 2 NAD(+) = 2-(4-dimethylaminophenyl)diazenylbenzoate + 2 NADH + 2 H(+). Its function is as follows. Quinone reductase that provides resistance to thiol-specific stress caused by electrophilic quinones. Functionally, also exhibits azoreductase activity. Catalyzes the reductive cleavage of the azo bond in aromatic azo compounds to the corresponding amines. The protein is FMN-dependent NADH:quinone oxidoreductase of Cereibacter sphaeroides (strain ATCC 17029 / ATH 2.4.9) (Rhodobacter sphaeroides).